The primary structure comprises 233 residues: 28 kDa ribonucleoprotein, chloroplastic (233 aa).

The span at 1 to 16 (CVAQTSEWEQEGSTNA) shows a compositional bias: polar residues. The tract at residues 1–52 (CVAQTSEWEQEGSTNAVLEGESDPEGAVSWGSETQVSDEGGVEGGQGFSEPP) is disordered. RRM domains lie at 55 to 133 (AKLF…KAAP) and 149 to 227 (CRVY…VAEE).

It is found in the plastid. The protein localises to the chloroplast. Functionally, probably involved in the 3'-end processing of chloroplast mRNA's. In Spinacia oleracea (Spinach), this protein is 28 kDa ribonucleoprotein, chloroplastic.